The primary structure comprises 464 residues: Putative guanine nucleotide-binding protein subunit alpha (464 aa).

In terms of domain architecture, G-alpha spans 33-415 (HSKLKRGDGP…ETKRDKYNEK (383 aa)). A G1 motif region spans residues 36–49 (LKRGDGPGESGKST). GTP-binding positions include 41–48 (GPGESGKS), 147–151 (DVGGQ), 214–220 (LRSRTKT), 239–243 (DVGGQ), 268–271 (RNRD), and 310–313 (TSQS). A Mg(2+)-binding site is contributed by Ser48. Positions 212–220 (DVLRSRTKT) are G2 motif. Thr220 serves as a coordination point for Mg(2+). A G3 motif region spans residues 235–244 (FRMVDVGGQR). A G4 motif region spans residues 306–313 (VMFLTSQS). Positions 382–387 (GYSGTC) are G5 motif.

It in the N-terminal section; belongs to the G-alpha family. The protein in the C-terminal section; belongs to the class-II aminoacyl-tRNA synthetase family. As to quaternary structure, g proteins are composed of 3 units; alpha, beta and gamma. The alpha chain contains the guanine nucleotide binding site.

In terms of biological role, guanine nucleotide-binding proteins (G proteins) are involved as modulators or transducers in various transmembrane signaling systems. The sequence is that of Putative guanine nucleotide-binding protein subunit alpha from Leishmania donovani.